A 41-amino-acid chain; its full sequence is Large ribosomal subunit protein bL36B (41 aa).

This sequence belongs to the bacterial ribosomal protein bL36 family.

The chain is Large ribosomal subunit protein bL36B from Neisseria meningitidis serogroup C (strain 053442).